The sequence spans 118 residues: Large ribosomal subunit protein bL20 (118 aa).

This sequence belongs to the bacterial ribosomal protein bL20 family.

In terms of biological role, binds directly to 23S ribosomal RNA and is necessary for the in vitro assembly process of the 50S ribosomal subunit. It is not involved in the protein synthesizing functions of that subunit. The polypeptide is Large ribosomal subunit protein bL20 (Cyanothece sp. (strain PCC 7425 / ATCC 29141)).